Here is a 198-residue protein sequence, read N- to C-terminus: NAD(P)H dehydrogenase (quinone) (198 aa).

Positions Ile-4–Val-189 constitute a Flavodoxin-like domain. FMN-binding positions include Ser-10 to Ile-15 and Thr-78 to Phe-80. Tyr-12 contributes to the NAD(+) binding site. Trp-98 provides a ligand contact to substrate. Residues Ser-113–Gly-118 and His-133 contribute to the FMN site.

The protein belongs to the WrbA family. FMN serves as cofactor.

The catalysed reaction is a quinone + NADH + H(+) = a quinol + NAD(+). The enzyme catalyses a quinone + NADPH + H(+) = a quinol + NADP(+). This chain is NAD(P)H dehydrogenase (quinone), found in Citrobacter koseri (strain ATCC BAA-895 / CDC 4225-83 / SGSC4696).